The sequence spans 391 residues: tRNA(Met) cytidine acetate ligase (391 aa).

Residues 7–20 (IAEY…HIYQ), G101, N153, and R178 each bind ATP.

The protein belongs to the TmcAL family.

The protein localises to the cytoplasm. It carries out the reaction cytidine(34) in elongator tRNA(Met) + acetate + ATP = N(4)-acetylcytidine(34) in elongator tRNA(Met) + AMP + diphosphate. Functionally, catalyzes the formation of N(4)-acetylcytidine (ac(4)C) at the wobble position of elongator tRNA(Met), using acetate and ATP as substrates. First activates an acetate ion to form acetyladenylate (Ac-AMP) and then transfers the acetyl group to tRNA to form ac(4)C34. The sequence is that of tRNA(Met) cytidine acetate ligase from Latilactobacillus sakei subsp. sakei (strain 23K) (Lactobacillus sakei subsp. sakei).